A 383-amino-acid polypeptide reads, in one-letter code: MRMMVAGGGTGGHVFPGIALAEEVVTRHPANDVVFVGTARGLEASVVPAAGFPIELIEVKGLKGKGIAGALLNLLLLPRAFLQSWRILKRWRPDVVVGVGGYASGPVVLTAWAMRIPTAVQEQNAIAGLTNRLLGRVVKAAFTAFPEAARHFAARKVYQLGNPIRRRLMENYMRPESAHGQPRLLVFGGSQGAHALNMRVIEALPHLADLRERIQITHQTGARDREYVEKGYRACGFTPDVREFIDDMSAAYAGCDLVVCRAGATTLAELTVCKKPSILVPFPAAADNHQVKNARSLVDAGAAVMIEERDLTGEVLAREIREILDAPERRERMARAAGRLGSPQAAKEIADVCMELVRRRWGSPFGQAREPGQKPARPPDLAS.

Residues 10–12 (TGG), Asn-124, Arg-165, Ser-190, Ile-245, and Gln-290 contribute to the UDP-N-acetyl-alpha-D-glucosamine site. Positions 364-383 (PFGQAREPGQKPARPPDLAS) are disordered.

Belongs to the glycosyltransferase 28 family. MurG subfamily.

It is found in the cell inner membrane. The enzyme catalyses di-trans,octa-cis-undecaprenyl diphospho-N-acetyl-alpha-D-muramoyl-L-alanyl-D-glutamyl-meso-2,6-diaminopimeloyl-D-alanyl-D-alanine + UDP-N-acetyl-alpha-D-glucosamine = di-trans,octa-cis-undecaprenyl diphospho-[N-acetyl-alpha-D-glucosaminyl-(1-&gt;4)]-N-acetyl-alpha-D-muramoyl-L-alanyl-D-glutamyl-meso-2,6-diaminopimeloyl-D-alanyl-D-alanine + UDP + H(+). It participates in cell wall biogenesis; peptidoglycan biosynthesis. In terms of biological role, cell wall formation. Catalyzes the transfer of a GlcNAc subunit on undecaprenyl-pyrophosphoryl-MurNAc-pentapeptide (lipid intermediate I) to form undecaprenyl-pyrophosphoryl-MurNAc-(pentapeptide)GlcNAc (lipid intermediate II). The chain is UDP-N-acetylglucosamine--N-acetylmuramyl-(pentapeptide) pyrophosphoryl-undecaprenol N-acetylglucosamine transferase from Anaeromyxobacter sp. (strain K).